We begin with the raw amino-acid sequence, 185 residues long: Anterior gradient protein 2 (185 aa).

The N-terminal stretch at 1 to 18 is a signal peptide; the sequence is MQTGLSLACLVLLCSVLG. The disordered stretch occupies residues 25-45; the sequence is PKRQAGATDTNGAAKSEPAPV.

It belongs to the AGR family. Expressed in the anterior of the dorsal ectoderm from late gastrula stages onwards. Becomes restricted to the cement gland anlage at the onset of neurulation (stages 13 to 14) and expressed exclusively in the cement gland from stage 18 onwards, with transient expression in the hatching gland during tailbud stages.

Its subcellular location is the secreted. In terms of biological role, involved in cement gland formation; probably specifies dorsal ectoderm to acquire an anterior fate such as cement gland and forebrain. Signals via the FGF pathway. This chain is Anterior gradient protein 2 (ag2), found in Xenopus laevis (African clawed frog).